Here is a 292-residue protein sequence, read N- to C-terminus: Beta-lactamase-like protein 2 homolog (292 aa).

Zn(2+) is bound by residues His76, His78, Asp80, His81, His145, Asp163, and His198.

It belongs to the metallo-beta-lactamase superfamily. Glyoxalase II family.

The chain is Beta-lactamase-like protein 2 homolog from Drosophila melanogaster (Fruit fly).